The chain runs to 543 residues: CTP synthase (543 aa).

Residues M1–L265 are amidoligase domain. S13 is a CTP binding site. S13 provides a ligand contact to UTP. Position 14-19 (S14–I19) interacts with ATP. Y54 contributes to the L-glutamine binding site. Position 71 (D71) interacts with ATP. The Mg(2+) site is built by D71 and E139. CTP contacts are provided by residues D146–E148, K186–Q191, and K222. UTP-binding positions include K186–Q191 and K222. An ATP-binding site is contributed by V240. Residues T291–L542 form the Glutamine amidotransferase type-1 domain. G353 lines the L-glutamine pocket. C380 acts as the Nucleophile; for glutamine hydrolysis in catalysis. L-glutamine contacts are provided by residues F381–Q384, E404, and R470. Residues H515 and E517 contribute to the active site.

Belongs to the CTP synthase family. As to quaternary structure, homotetramer.

It catalyses the reaction UTP + L-glutamine + ATP + H2O = CTP + L-glutamate + ADP + phosphate + 2 H(+). The enzyme catalyses L-glutamine + H2O = L-glutamate + NH4(+). It carries out the reaction UTP + NH4(+) + ATP = CTP + ADP + phosphate + 2 H(+). The protein operates within pyrimidine metabolism; CTP biosynthesis via de novo pathway; CTP from UDP: step 2/2. Its activity is regulated as follows. Allosterically activated by GTP, when glutamine is the substrate; GTP has no effect on the reaction when ammonia is the substrate. The allosteric effector GTP functions by stabilizing the protein conformation that binds the tetrahedral intermediate(s) formed during glutamine hydrolysis. Inhibited by the product CTP, via allosteric rather than competitive inhibition. In terms of biological role, catalyzes the ATP-dependent amination of UTP to CTP with either L-glutamine or ammonia as the source of nitrogen. Regulates intracellular CTP levels through interactions with the four ribonucleotide triphosphates. In Acidiphilium cryptum (strain JF-5), this protein is CTP synthase.